The chain runs to 200 residues: Integrin beta-1-binding protein 1 (200 aa).

A compositionally biased stretch (basic residues) spans 1–10 (MFRKGKKRHS). The segment at 1-56 (MFRKGKKRHSSSSSQSSEISTKSKSVDSSLGGLSRSSTVASLDTDSTKSSGQSNNN) is disordered. A Nuclear localization signal motif is present at residues 6–7 (KK). The span at 11-29 (SSSSQSSEISTKSKSVDSS) shows a compositional bias: low complexity. Positions 34-56 (SRSSTVASLDTDSTKSSGQSNNN) are enriched in polar residues. Position 38 is a phosphothreonine; by CaMK2 (Thr38). Ser41 carries the phosphoserine modification. Residues 58-200 (DTCAEFRIKY…FDSVLTSEKP (143 aa)) form the PID domain. Residues 136-139 (YLII) form an interaction with KRIT1 region. The segment at 139 to 141 (IRM) is interaction with ITGB1.

As to quaternary structure, interacts (via N-terminus and PTB domain) with ROCK1. Found in a complex, at least composed of ITGB1BP1, KRIT1 and RAP1A. Interacts (via C-terminal region) with ITGB1 (via C-terminal cytoplasmic tail); the interaction prevents talin TLN1 binding to ITGB1 and KRIT1 and ITGB1 compete for the same binding site. Interacts with KRIT1 (via N-terminal NPXY motif); the interaction induces the opening conformation of KRIT1 and KRIT1 and ITGB1 compete for the same binding site. Isoform 2 does not interact with ITGB1. Interacts with CDC42 (GTP- or GDP-bound form); the interaction is increased with the CDC42-membrane bound forms and prevents both CDC42 activation and cell spreading. Interacts (via C-terminal domain region) with NME2. Interacts with FERMT2 and RAC1. In terms of processing, phosphorylation at Thr-38 seems to enhance integrin alpha5beta1-mediated cell adhesion. The degree of phosphorylation is regulated by integrin-dependent cell-matrix interaction.

It localises to the nucleus. The protein localises to the cytoplasm. It is found in the cytoskeleton. The protein resides in the cell membrane. Its subcellular location is the cell projection. It localises to the lamellipodium. The protein localises to the ruffle. Key regulator of the integrin-mediated cell-matrix interaction signaling by binding to the ITGB1 cytoplasmic tail and preventing the activation of integrin alpha-5/beta-1 (heterodimer of ITGA5 and ITGB1) by talin or FERMT1. Plays a role in cell proliferation, differentiation, spreading, adhesion and migration in the context of mineralization and bone development and angiogenesis. Stimulates cellular proliferation in a fibronectin-dependent manner. Involved in the regulation of beta-1 integrin-containing focal adhesion (FA) site dynamics by controlling its assembly rate during cell adhesion; inhibits beta-1 integrin clustering within FA by directly competing with talin TLN1, and hence stimulates osteoblast spreading and migration in a fibronectin- and/or collagen-dependent manner. Acts as a guanine nucleotide dissociation inhibitor (GDI) by regulating Rho family GTPases during integrin-mediated cell matrix adhesion; reduces the level of active GTP-bound form of both CDC42 and RAC1 GTPases upon cell adhesion to fibronectin. Stimulates the release of active CDC42 from the membranes to maintain it in an inactive cytoplasmic pool. Participates in the translocation of the Rho-associated protein kinase ROCK1 to membrane ruffles at cell leading edges of the cell membrane, leading to an increase of myoblast cell migration on laminin. Plays a role in bone mineralization at a late stage of osteoblast differentiation; modulates the dynamic formation of focal adhesions into fibrillar adhesions, which are adhesive structures responsible for fibronectin deposition and fibrillogenesis. Plays a role in blood vessel development; acts as a negative regulator of angiogenesis by attenuating endothelial cell proliferation and migration, lumen formation and sprouting angiogenesis by promoting AKT phosphorylation and inhibiting ERK1/2 phosphorylation through activation of the Notch signaling pathway. Promotes transcriptional activity of the MYC promoter. The sequence is that of Integrin beta-1-binding protein 1 (ITGB1BP1) from Bos taurus (Bovine).